A 356-amino-acid polypeptide reads, in one-letter code: Protein ATP1B4 (356 aa).

The Nuclear segment spans residues 1-109; that stretch reads MRRQLRSRRA…SLARTGQSRS (109 aa). The interval 32–77 is disordered; the sequence is LADEEEEAEEEAQVMMVPGLEEEEEEEEGKEEEEEREEEEGQGQST. Acidic residues-rich tracts occupy residues 33 to 43 and 51 to 72; these read ADEEEEAEEEA and LEEE…EEEG. The helical; Signal-anchor for type II membrane protein transmembrane segment at 110–130 threads the bilayer; sequence LILVIYFFFYASLAAVITLFI. At 131–356 the chain is on the perinuclear space side; sequence YMLFLAISPY…RIIFTLNIET (226 aa).

This sequence belongs to the X(+)/potassium ATPases subunit beta family. In terms of assembly, does not associate with known Na,K-ATPase alpha-subunits. Associates with a SMAD7-transcriptional complex. Interacts with SNW1 and TOR1AIP1. Expressed in perinatal myocytes (at protein level). Expressed during postnatal development in skeletal muscle and heart.

The protein localises to the nucleus inner membrane. In terms of biological role, may act as a transcriptional coregulator during muscle development through its interaction with SNW1. Has lost its ancestral function as a Na,K-ATPase beta-subunit. The polypeptide is Protein ATP1B4 (Atp1b4) (Rattus norvegicus (Rat)).